The chain runs to 677 residues: Methionine--tRNA ligase (677 aa).

The 'HIGH' region signature appears at 15–25 (PYANGSIHLGH). Zn(2+) contacts are provided by cysteine 146, cysteine 149, cysteine 159, and cysteine 162. The short motif at 333–337 (KMSKS) is the 'KMSKS' region element. Lysine 336 lines the ATP pocket. The region spanning 575–677 (DFAKVDLRVA…AGAKPGHQVK (103 aa)) is the tRNA-binding domain.

This sequence belongs to the class-I aminoacyl-tRNA synthetase family. MetG type 1 subfamily. In terms of assembly, homodimer. The cofactor is Zn(2+).

The protein resides in the cytoplasm. The catalysed reaction is tRNA(Met) + L-methionine + ATP = L-methionyl-tRNA(Met) + AMP + diphosphate. Functionally, is required not only for elongation of protein synthesis but also for the initiation of all mRNA translation through initiator tRNA(fMet) aminoacylation. In Shigella flexneri serotype 5b (strain 8401), this protein is Methionine--tRNA ligase.